Consider the following 87-residue polypeptide: Potassium channel toxin TsTXK-beta/Cryptide TyPep-16 (87 aa).

The signal sequence occupies residues 1 to 19 (MERKLALLLILGMVTLASC). The BetaSPN-type CS-alpha/beta domain occupies 53–87 (QFGCPAYEGYCNDHCNDIERKDGECHGFKCKCAKD). Disulfide bonds link cysteine 56–cysteine 77, cysteine 63–cysteine 82, and cysteine 67–cysteine 84.

It belongs to the long chain scorpion toxin family. Class 1 subfamily. As to expression, expressed by the venom gland.

It is found in the secreted. In terms of biological role, specifically blocks voltage-gated potassium channels Kv4.2/KCND2. When measured at the peak current, the blocking effect of this toxin is about 65% and shows an IC(50)=652 nM. However, when measured at a later moment of the depolarising test pulse (500 ms), a 100% block of the current is observed with an IC(50)=313 nM. This may indicate a preference of the toxin for binding the inactivated state of the channel. The inhibition is completely reversible. In vivo, intraplantar injection into rat paw induces overt nociception (licking and lifting behaviors) and decreases the mechanical nociceptive threshold (hyperalgesia). Furthermore, the hyperalgesia is prolonged when intrathecal injections are performed. Induces discomfort and anxiety in mice, as it moderately diminishes locomotion (but has no effect on rearing behavior). Does not cause hemolysis, mast cell degranulation, LDH release, and does not have antimicrobial activity. Does not cause edema and pain. Functionally, does not induce hemolytic activity, lactate dehydrogenase (LDH) release from mast cells, mast cell degranulation, and antimicrobial effects. In vivo, injection into mice causes moderate edema formation, but induces very weak or no change in nociceptive sensibility. It also reduces mice locomotion, suggesting an increase in anxiety, but causes no alteration in rearing (standing on hind limbs). In Tityus serrulatus (Brazilian scorpion), this protein is Potassium channel toxin TsTXK-beta/Cryptide TyPep-16.